The primary structure comprises 1185 residues: Chromosome partition protein Smc (1185 aa).

32–39 (PNGSGKSN) provides a ligand contact to ATP. The stretch at 167 to 494 (ISKYKSRKMD…KLNEKNSHLS (328 aa)) forms a coiled coil. The SMC hinge domain maps to 521–639 (TGIIGVVADQ…TDLKSAIEIA (119 aa)). Positions 677 to 1031 (RSRKIEDLKK…KVIQEIEETM (355 aa)) form a coiled coil.

The protein belongs to the SMC family. As to quaternary structure, homodimer.

The protein resides in the cytoplasm. Functionally, required for chromosome condensation and partitioning. This chain is Chromosome partition protein Smc, found in Halothermothrix orenii (strain H 168 / OCM 544 / DSM 9562).